The primary structure comprises 445 residues: Methionine aminopeptidase 2 (445 aa).

The segment at 1–89 (MAAQAPVDEI…DPPRVLISQL (89 aa)) is disordered. The segment covering 60 to 74 (AKKKKKRKPKKKKKN) has biased composition (basic residues). H198 contributes to the substrate binding site. Residues D218, D229, and H298 each contribute to the a divalent metal cation site. A substrate-binding site is contributed by H306. E331 and E426 together coordinate a divalent metal cation.

Belongs to the peptidase M24A family. Methionine aminopeptidase eukaryotic type 2 subfamily. It depends on Co(2+) as a cofactor. Zn(2+) is required as a cofactor. The cofactor is Mn(2+). Requires Fe(2+) as cofactor.

It localises to the cytoplasm. The catalysed reaction is Release of N-terminal amino acids, preferentially methionine, from peptides and arylamides.. In terms of biological role, cotranslationally removes the N-terminal methionine from nascent proteins. The N-terminal methionine is often cleaved when the second residue in the primary sequence is small and uncharged (Met-Ala-, Cys, Gly, Pro, Ser, Thr, or Val). The chain is Methionine aminopeptidase 2 from Podospora anserina (strain S / ATCC MYA-4624 / DSM 980 / FGSC 10383) (Pleurage anserina).